Here is a 261-residue protein sequence, read N- to C-terminus: 3-methyl-2-oxobutanoate hydroxymethyltransferase (261 aa).

Mg(2+) contacts are provided by Asp-47 and Asp-86. Residues 47–48 (DS), Asp-86, and Lys-116 each bind 3-methyl-2-oxobutanoate. Position 118 (Glu-118) interacts with Mg(2+). Catalysis depends on Glu-186, which acts as the Proton acceptor.

This sequence belongs to the PanB family. As to quaternary structure, homodecamer; pentamer of dimers. Mg(2+) is required as a cofactor.

Its subcellular location is the cytoplasm. It catalyses the reaction 3-methyl-2-oxobutanoate + (6R)-5,10-methylene-5,6,7,8-tetrahydrofolate + H2O = 2-dehydropantoate + (6S)-5,6,7,8-tetrahydrofolate. It functions in the pathway cofactor biosynthesis; (R)-pantothenate biosynthesis; (R)-pantoate from 3-methyl-2-oxobutanoate: step 1/2. Functionally, catalyzes the reversible reaction in which hydroxymethyl group from 5,10-methylenetetrahydrofolate is transferred onto alpha-ketoisovalerate to form ketopantoate. This is 3-methyl-2-oxobutanoate hydroxymethyltransferase from Thermosynechococcus vestitus (strain NIES-2133 / IAM M-273 / BP-1).